The following is a 165-amino-acid chain: Growth arrest and DNA damage-inducible protein GADD45 alpha (165 aa).

Residue Thr2 is modified to Phosphothreonine.

It belongs to the GADD45 family. In terms of assembly, interacts with AURKA, PCNA, GADD45GIP1 and MAPK14.

The protein resides in the nucleus. Functionally, might affect PCNA interaction with some CDK (cell division protein kinase) complexes; stimulates DNA excision repair in vitro and inhibits entry of cells into S phase. In T-cells, functions as a regulator of p38 MAPKs by inhibiting p88 phosphorylation and activity. In Bos taurus (Bovine), this protein is Growth arrest and DNA damage-inducible protein GADD45 alpha (GADD45A).